A 63-amino-acid chain; its full sequence is Large ribosomal subunit protein uL29 (63 aa).

It belongs to the universal ribosomal protein uL29 family.

In Bacillus cereus (strain ATCC 14579 / DSM 31 / CCUG 7414 / JCM 2152 / NBRC 15305 / NCIMB 9373 / NCTC 2599 / NRRL B-3711), this protein is Large ribosomal subunit protein uL29.